The primary structure comprises 60 residues: Large ribosomal subunit protein bL32 (60 aa).

It belongs to the bacterial ribosomal protein bL32 family.

The chain is Large ribosomal subunit protein bL32 from Borrelia duttonii (strain Ly).